We begin with the raw amino-acid sequence, 378 residues long: Cytochrome b (378 aa).

4 helical membrane-spanning segments follow: residues 34 to 54 (FGSL…FLAM), 78 to 99 (WLLR…YLHV), 114 to 134 (WLIG…GYVL), and 179 to 199 (FFTF…IHLL). Heme b contacts are provided by H84 and H98. 2 residues coordinate heme b: H183 and H197. Residue H202 participates in a ubiquinone binding. 4 helical membrane passes run 227–247 (FKDI…VLIS), 289–309 (LGGV…PFYN), 321–341 (INQV…WIGA), and 348–368 (YVLI…VNPL).

The protein belongs to the cytochrome b family. In terms of assembly, the main subunits of complex b-c1 are: cytochrome b, cytochrome c1 and the Rieske protein. Heme b is required as a cofactor.

Its subcellular location is the mitochondrion inner membrane. Its function is as follows. Component of the ubiquinol-cytochrome c reductase complex (complex III or cytochrome b-c1 complex) that is part of the mitochondrial respiratory chain. The b-c1 complex mediates electron transfer from ubiquinol to cytochrome c. Contributes to the generation of a proton gradient across the mitochondrial membrane that is then used for ATP synthesis. In Drosophila melanogaster (Fruit fly), this protein is Cytochrome b (mt:Cyt-b).